The chain runs to 463 residues: tRNA-2-methylthio-N(6)-dimethylallyladenosine synthase (463 aa).

Residues 5 to 125 enclose the MTTase N-terminal domain; the sequence is RKLHIKSYGC…LPQLLAKAEQ (121 aa). Positions 14, 50, 88, 166, 170, and 173 each coordinate [4Fe-4S] cluster. A Radical SAM core domain is found at 152–384; it reads RARGISAFVT…QQLIDQQQSA (233 aa). In terms of domain architecture, TRAM spans 387 to 449; sequence KAAIGRTVEV…RYSLLGELAS (63 aa).

The protein belongs to the methylthiotransferase family. MiaB subfamily. Monomer. It depends on [4Fe-4S] cluster as a cofactor.

The protein localises to the cytoplasm. The catalysed reaction is N(6)-dimethylallyladenosine(37) in tRNA + (sulfur carrier)-SH + AH2 + 2 S-adenosyl-L-methionine = 2-methylsulfanyl-N(6)-dimethylallyladenosine(37) in tRNA + (sulfur carrier)-H + 5'-deoxyadenosine + L-methionine + A + S-adenosyl-L-homocysteine + 2 H(+). Its function is as follows. Catalyzes the methylthiolation of N6-(dimethylallyl)adenosine (i(6)A), leading to the formation of 2-methylthio-N6-(dimethylallyl)adenosine (ms(2)i(6)A) at position 37 in tRNAs that read codons beginning with uridine. This Rhodopseudomonas palustris (strain ATCC BAA-98 / CGA009) protein is tRNA-2-methylthio-N(6)-dimethylallyladenosine synthase.